Here is a 608-residue protein sequence, read N- to C-terminus: Protein SHQ1 homolog (608 aa).

Disordered regions lie at residues 487 to 531 (DAGS…SFYS) and 543 to 608 (IVYE…ASTT). Positions 489–498 (GSQGSSPQQQ) are enriched in low complexity. 2 stretches are compositionally biased toward acidic residues: residues 502–524 (DDLDLDNDTSGQEDETTTDDESV) and 543–579 (IVYEDDEEDEDDDEDGDDDEDGDGDEDEDEDEDEDDS). Polar residues predominate over residues 588 to 608 (EAEGNSVIEQCSNSETAASTT).

Belongs to the SHQ1 family.

In terms of biological role, required for the quantitative accumulation of H/ACA ribonucleoproteins (RNPs). This is Protein SHQ1 homolog from Drosophila melanogaster (Fruit fly).